Here is a 302-residue protein sequence, read N- to C-terminus: Oligopeptide transport system permease protein OppC (302 aa).

The Cytoplasmic portion of the chain corresponds to 1–39 (MMLSKKNSETLENFSEKLEVEGRSLWQDARRRFMHNRAA). A helical transmembrane segment spans residues 40–62 (VASLIVLFLIALFVTVAPMLSQF). At 63-102 (TYFDTDWGMMSSAPDMASGHYFGTDSSGRDLLVRVAIGGR) the chain is on the periplasmic side. The ABC transmembrane type-1 domain occupies 101-290 (GRISLMVGIA…VTLFCFNFIG (190 aa)). Residues 103–125 (ISLMVGIAAALVAVIVGTLYGSL) form a helical membrane-spanning segment. The Cytoplasmic segment spans residues 126–137 (SGYLGGKIDSVM). A helical transmembrane segment spans residues 138–160 (MRLLEILNSFPFMFFVILLVTFF). Topologically, residues 161-163 (GQN) are periplasmic. A helical transmembrane segment spans residues 164-183 (ILLIFVAIGMVSWLDMARIV). At 184 to 213 (RGQTLSLKRKEFIEAAQVGGVSTASIVIRH) the chain is on the cytoplasmic side. Residues 214 to 236 (IVPNVLGVVVVYASLLVPSMILF) traverse the membrane as a helical segment. Topologically, residues 237–267 (ESFLSFLGLGTQEPLSSWGALLSDGANSMEV) are periplasmic. A helical membrane pass occupies residues 268 to 290 (SPWLLLFPAGFLVVTLFCFNFIG). The Cytoplasmic segment spans residues 291–302 (DGLRDALDPKDR).

It belongs to the binding-protein-dependent transport system permease family. OppBC subfamily. The complex is composed of two ATP-binding proteins (OppD and OppF), two transmembrane proteins (OppB and OppC) and a solute-binding protein (OppA).

It is found in the cell inner membrane. Its function is as follows. Part of the ABC transporter complex OppABCDF involved in the uptake of oligopeptides, including the cell wall murein tripeptide L-alanyl-gamma-D-glutamyl-meso-diaminopimelate. Responsible for the translocation of the substrate across the membrane. Plays an important nutritional role and is involved in the recycling of cell wall peptides. The protein is Oligopeptide transport system permease protein OppC of Salmonella typhimurium (strain LT2 / SGSC1412 / ATCC 700720).